A 222-amino-acid chain; its full sequence is uncharacterized protein (222 aa).

The disordered stretch occupies residues 142 to 222 (ARRGGCVHPP…LPDPPSAGHL (81 aa)). Positions 160-169 (QSRSISSRRA) are enriched in low complexity. The span at 182–196 (PRRRPHRHRTRPQTR) shows a compositional bias: basic residues.

The protein belongs to the Rv1128c/1148c/1588c/1702c/1945/3466 family.

This is an uncharacterized protein from Mycobacterium tuberculosis (strain CDC 1551 / Oshkosh).